The chain runs to 461 residues: D-phenylhydantoinase (461 aa).

H59, H61, and K151 together coordinate a divalent metal cation. Position 151 is an N6-carboxylysine (K151). Y156 lines the substrate pocket. Residues H182 and H239 each contribute to the a divalent metal cation site. Residue S286 participates in substrate binding. D313 contributes to the a divalent metal cation binding site. N335 provides a ligand contact to substrate.

The protein belongs to the metallo-dependent hydrolases superfamily. Hydantoinase/dihydropyrimidinase family. As to quaternary structure, homotetramer. Requires a divalent metal cation as cofactor. Post-translationally, carboxylation allows a single lysine to coordinate two divalent metal cations.

The enzyme catalyses D-5-phenylhydantoin + H2O = N-carbamoyl-D-phenylglycine + H(+). Catalyzes the stereospecific hydrolysis of the cyclic amide bond of D-hydantoin derivatives with an aromatic side chains at the 5'-position. Has no activity on dihydropyrimidines. The physiological function is unknown. The polypeptide is D-phenylhydantoinase (Escherichia coli (strain UTI89 / UPEC)).